The chain runs to 422 residues: Serine hydroxymethyltransferase (422 aa).

(6S)-5,6,7,8-tetrahydrofolate contacts are provided by residues Leu-118 and 122-124; that span reads GHL. Residue Lys-227 is modified to N6-(pyridoxal phosphate)lysine. Glu-242 is a (6S)-5,6,7,8-tetrahydrofolate binding site.

This sequence belongs to the SHMT family. As to quaternary structure, homodimer. It depends on pyridoxal 5'-phosphate as a cofactor.

The protein resides in the cytoplasm. It catalyses the reaction (6R)-5,10-methylene-5,6,7,8-tetrahydrofolate + glycine + H2O = (6S)-5,6,7,8-tetrahydrofolate + L-serine. It participates in one-carbon metabolism; tetrahydrofolate interconversion. Its pathway is amino-acid biosynthesis; glycine biosynthesis; glycine from L-serine: step 1/1. Functionally, catalyzes the reversible interconversion of serine and glycine with tetrahydrofolate (THF) serving as the one-carbon carrier. This reaction serves as the major source of one-carbon groups required for the biosynthesis of purines, thymidylate, methionine, and other important biomolecules. Also exhibits THF-independent aldolase activity toward beta-hydroxyamino acids, producing glycine and aldehydes, via a retro-aldol mechanism. In Sulfurihydrogenibium sp. (strain YO3AOP1), this protein is Serine hydroxymethyltransferase.